We begin with the raw amino-acid sequence, 253 residues long: Protein phosphatase CheZ (253 aa).

A disordered region spans residues 1–84 (MTQEELDALM…EWPPPPPTEE (84 aa)). The segment covering 21–69 (LETKEETKEEAKEEAKEEAKEEAKEKEEIKEESSSQKMTVKKEDAEKYG) has biased composition (basic and acidic residues).

The protein belongs to the CheZ family. As to quaternary structure, interacts with ChePep; this interaction is essential for each other polar localization.

The protein localises to the cytoplasm. Plays an important role in bacterial chemotaxis signal transduction pathway by accelerating the dephosphorylation of phosphorylated CheY (CheY-P). Also dephosphorylates CheV2 but not CheV1 or CheV3. In addition, forms a distinct chemotaxis regulatory complex with ChePep independently of the core chemotaxis signaling proteins. This Helicobacter pylori (strain ATCC 700392 / 26695) (Campylobacter pylori) protein is Protein phosphatase CheZ.